The primary structure comprises 126 residues: Protein chibby homolog 1 (126 aa).

Residues 1–10 (MPFFGNTFSP) show a composition bias toward polar residues. Positions 1-26 (MPFFGNTFSPKKTPPRKSASLSNLHS) are disordered. 2 positions are modified to phosphoserine: S9 and S20. A minimal region for the interaction with PKD2 region spans residues 60–112 (IAETGVSGGVDRREVQRLRRRNQQLEEENNLLRLKVDILLDMLSESTAESHLM). Positions 67-125 (GGVDRREVQRLRRRNQQLEEENNLLRLKVDILLDMLSESTAESHLMEKELDELRISRKR) form a coiled coil. Positions 77-98 (LRRRNQQLEEENNLLRLKVDIL) are leucine-zipper; mediates homodimerization.

Belongs to the chibby family. As to quaternary structure, homodimer. Homodimerization is essential for nuclear localization and interaction with KPNA4 but is dispensable for interaction with CTNNB1. Interacts with polycystin-2/PKD2 and GM130. Interacts with the C-terminal region of CTNNB1. Interacts (C-terminus) with TCIM (C-terminus), TCIM competes with CTNNB1 for the interaction with CBY1. Interacts with FAM92A; this interaction facilitates targeting of FAM92A to cilium basal body. Interacts with CIBAR2. Interacts with KPNA4. As to expression, widely expressed. Expressed at higher levels in heart, skeletal muscle, kidney and placenta. Also found in brain, lung, liver and testis. Significantly down-regulated in thyroid and metastatic uterine tumors.

Its subcellular location is the nucleus speckle. The protein localises to the cytoplasm. It localises to the cytoskeleton. The protein resides in the cilium basal body. It is found in the microtubule organizing center. Its subcellular location is the centrosome. The protein localises to the centriole. It localises to the golgi apparatus. The protein resides in the trans-Golgi network. It is found in the cell projection. Its subcellular location is the cilium. The protein localises to the flagellum. It localises to the nucleus. Inhibits the Wnt/Wingless pathway by binding to CTNNB1/beta-catenin and inhibiting beta-catenin-mediated transcriptional activation through competition with TCF/LEF transcription factors. Has also been shown to play a role in regulating the intracellular trafficking of polycystin-2/PKD2 and possibly of other intracellular proteins. Promotes adipocyte and cardiomyocyte differentiation. The polypeptide is Protein chibby homolog 1 (CBY1) (Homo sapiens (Human)).